The chain runs to 231 residues: Protein FMP52, mitochondrial (231 aa).

The transit peptide at 1-44 (MNGLVLGATGLCGGGFLRHAQEAPQFSKVYAILRRELPFPATDK) directs the protein to the mitochondrion.

This sequence belongs to the FMP52 family.

It localises to the mitochondrion outer membrane. This Saccharomyces cerevisiae (strain ATCC 204508 / S288c) (Baker's yeast) protein is Protein FMP52, mitochondrial (FMP52).